The following is a 514-amino-acid chain: Variant surface glycoprotein ILTAT 1.24 (514 aa).

The first 23 residues, 1–23 (MVYRNILQLSVLKVLLIVLIVEA), serve as a signal peptide directing secretion. Disulfide bonds link C37–C162 and C143–C204. Residue N443 is glycosylated (N-linked (GlcNAc...) asparagine). The segment at 451-476 (GVPVTQTQTAGADTTAEKCKGKGEKD) is disordered. Residues 455-464 (TQTQTAGADT) are compositionally biased toward low complexity. A compositionally biased stretch (basic and acidic residues) spans 465–476 (TAEKCKGKGEKD). D491 carries GPI-anchor amidated aspartate lipidation. The propeptide at 492–514 (SSILANKQFALSVASAAFVALLF) is removed in mature form.

It localises to the cell membrane. Its function is as follows. VSG forms a coat on the surface of the parasite. The trypanosome evades the immune response of the host by expressing a series of antigenically distinct VSGs from an estimated 1000 VSG genes. This Trypanosoma brucei brucei protein is Variant surface glycoprotein ILTAT 1.24.